Consider the following 227-residue polypeptide: Ribonuclease HII (227 aa).

Residues 16 to 205 (SLLAGVDEVG…VKMALDAVGV (190 aa)) enclose the RNase H type-2 domain. Aspartate 22, glutamate 23, and aspartate 114 together coordinate a divalent metal cation.

This sequence belongs to the RNase HII family. Requires Mn(2+) as cofactor. The cofactor is Mg(2+).

It is found in the cytoplasm. The enzyme catalyses Endonucleolytic cleavage to 5'-phosphomonoester.. Endonuclease that specifically degrades the RNA of RNA-DNA hybrids. The sequence is that of Ribonuclease HII from Marinobacter nauticus (strain ATCC 700491 / DSM 11845 / VT8) (Marinobacter aquaeolei).